The primary structure comprises 384 residues: Galactokinase (384 aa).

Residue 35–38 (EHTD) participates in substrate binding. ATP is bound by residues Ser69 and 125 to 131 (GAGLSSS). Mg(2+) is bound by residues Ser131 and Glu163. Catalysis depends on Asp175, which acts as the Proton acceptor. Substrate is bound at residue Tyr224.

This sequence belongs to the GHMP kinase family. GalK subfamily.

It is found in the cytoplasm. The enzyme catalyses alpha-D-galactose + ATP = alpha-D-galactose 1-phosphate + ADP + H(+). The protein operates within carbohydrate metabolism; galactose metabolism. Functionally, catalyzes the transfer of the gamma-phosphate of ATP to D-galactose to form alpha-D-galactose-1-phosphate (Gal-1-P). The protein is Galactokinase of Aliivibrio fischeri (strain MJ11) (Vibrio fischeri).